The sequence spans 485 residues: Cobyric acid synthase (485 aa).

In terms of domain architecture, GATase cobBQ-type spans 250-436; the sequence is RRIVACPILP…IHGLLASPAL (187 aa). Residue C332 is the Nucleophile of the active site. Residue H428 is part of the active site.

This sequence belongs to the CobB/CobQ family. CobQ subfamily.

Its pathway is cofactor biosynthesis; adenosylcobalamin biosynthesis. Its function is as follows. Catalyzes amidations at positions B, D, E, and G on adenosylcobyrinic A,C-diamide. NH(2) groups are provided by glutamine, and one molecule of ATP is hydrogenolyzed for each amidation. This chain is Cobyric acid synthase, found in Sphingopyxis alaskensis (strain DSM 13593 / LMG 18877 / RB2256) (Sphingomonas alaskensis).